The primary structure comprises 229 residues: DNA repair protein RecO (229 aa).

It belongs to the RecO family.

Functionally, involved in DNA repair and RecF pathway recombination. The sequence is that of DNA repair protein RecO from Legionella pneumophila (strain Paris).